A 622-amino-acid polypeptide reads, in one-letter code: Protein translocase subunit SecD (622 aa).

6 helical membrane passes run 6 to 26 (FKIG…YPTV), 460 to 480 (AGLR…IFYY), 485 to 505 (MIAD…LAAF), 512 to 532 (PGIA…VLIF), 559 to 579 (AIFD…SFGV), and 584 to 604 (GFAV…IVIT).

It belongs to the SecD/SecF family. SecD subfamily. As to quaternary structure, forms a complex with SecF. Part of the essential Sec protein translocation apparatus which comprises SecA, SecYEG and auxiliary proteins SecDF. Other proteins may also be involved.

It is found in the cell inner membrane. Its function is as follows. Part of the Sec protein translocase complex. Interacts with the SecYEG preprotein conducting channel. SecDF uses the proton motive force (PMF) to complete protein translocation after the ATP-dependent function of SecA. The chain is Protein translocase subunit SecD from Rhodothermus marinus (strain ATCC 43812 / DSM 4252 / R-10) (Rhodothermus obamensis).